A 404-amino-acid polypeptide reads, in one-letter code: Agnestins biosynthesis cluster transcription factor AgnL10 (404 aa).

Residues Cys23–Cys50 constitute a DNA-binding region (zn(2)-C6 fungal-type). Disordered stretches follow at residues Ala54–Ala83, Ala188–Gly209, and Pro294–Asp318. Residues Arg57–Asn68 show a composition bias toward basic residues. Positions Pro74–Ala83 are enriched in polar residues. The segment covering Ala188 to Ala197 has biased composition (low complexity).

The protein localises to the nucleus. Transcription factor that regulates the expression of the gene cluster that mediates the biosynthesis of agnestins, dihydroxy-xanthone metabolites. This Paecilomyces divaricatus (Penicillium divaricatum) protein is Agnestins biosynthesis cluster transcription factor AgnL10.